Consider the following 212-residue polypeptide: External core antigen (212 aa).

The N-terminal stretch at 1 to 19 (MQLFHLCLIISCSCPTVQA) is a signal peptide. The segment at 25–27 (GWL) is HBEAG. The interval 165-212 (NAPILSTLPETTVVRRRGRSPRRRTPSPRRRRSQSPRRRRSQSRESQC) is disordered. Residues 178–205 (VRRRGRSPRRRTPSPRRRRSQSPRRRRS) show a composition bias toward basic residues. The stretch at 184–190 (SPRRRTP) is one 1; half-length repeat. Positions 184-206 (SPRRRTPSPRRRRSQSPRRRRSQ) are 3 X 8 AA repeats of S-P-R-R-R-R-S-Q. The propeptide occupies 184 to 212 (SPRRRTPSPRRRRSQSPRRRRSQSRESQC). 2 tandem repeats follow at residues 191–198 (SPRRRRSQ) and 199–206 (SPRRRRSQ).

Belongs to the orthohepadnavirus precore antigen family. As to quaternary structure, homodimerizes. In terms of processing, phosphorylated. Post-translationally, cleaved by host furin.

The protein localises to the secreted. The protein resides in the host nucleus. Its function is as follows. May regulate immune response to the intracellular capsid in acting as a T-cell tolerogen, by having an immunoregulatory effect which prevents destruction of infected cells by cytotoxic T-cells. This immune regulation may predispose to chronicity during perinatal infections and prevent severe liver injury during adult infections. The protein is External core antigen of Homo sapiens (Human).